The sequence spans 809 residues: Putative zinc metalloprotease TRE2 (809 aa).

2 stretches are compositionally biased toward polar residues: residues 1–12 (MRSSYQPVSTTN) and 20–30 (PTASSSHNLLM). Positions 1-66 (MRSSYQPVST…PSYEFDIEDP (66 aa)) are disordered. Residues 1–125 (MRSSYQPVST…KIGNPFILRR (125 aa)) are Cytoplasmic-facing. The segment covering 37–50 (SPPSSNDNSIETNI) has biased composition (low complexity). The chain crosses the membrane as a helical; Signal-anchor for type II membrane protein span at residues 126 to 146 (FFYIIFMSFIAYYVLSSGYLF). Residues 147–809 (NEKASGSKGM…VEETNDIGYK (663 aa)) are Extracellular-facing. Asn-228 is a glycosylation site (N-linked (GlcNAc...) asparagine). The 95-residue stretch at 255-349 (SNGKLSKVSL…STGDASGLNW (95 aa)) folds into the PA domain. Asn-669 and Asn-736 each carry an N-linked (GlcNAc...) asparagine glycan.

This sequence belongs to the peptidase M28 family. M28B subfamily.

It is found in the membrane. The sequence is that of Putative zinc metalloprotease TRE2 (TRE2) from Saccharomyces cerevisiae (strain ATCC 204508 / S288c) (Baker's yeast).